The sequence spans 270 residues: tRNA pseudouridine synthase A (270 aa).

The active-site Nucleophile is the Asp51. Substrate is bound at residue Tyr109.

Belongs to the tRNA pseudouridine synthase TruA family. In terms of assembly, homodimer.

The enzyme catalyses uridine(38/39/40) in tRNA = pseudouridine(38/39/40) in tRNA. Functionally, formation of pseudouridine at positions 38, 39 and 40 in the anticodon stem and loop of transfer RNAs. This is tRNA pseudouridine synthase A from Burkholderia mallei (strain ATCC 23344).